A 76-amino-acid chain; its full sequence is Bowman-Birk type proteinase inhibitor DE-3 (76 aa).

7 disulfide bridges follow: cysteine 16-cysteine 70, cysteine 17-cysteine 32, cysteine 20-cysteine 66, cysteine 22-cysteine 30, cysteine 40-cysteine 47, cysteine 44-cysteine 59, and cysteine 49-cysteine 57.

This sequence belongs to the Bowman-Birk serine protease inhibitor family.

The protein is Bowman-Birk type proteinase inhibitor DE-3 of Macrotyloma axillare (Perennial horse gram).